We begin with the raw amino-acid sequence, 202 residues long: Imidazoleglycerol-phosphate dehydratase (202 aa).

Belongs to the imidazoleglycerol-phosphate dehydratase family.

Its subcellular location is the cytoplasm. It catalyses the reaction D-erythro-1-(imidazol-4-yl)glycerol 3-phosphate = 3-(imidazol-4-yl)-2-oxopropyl phosphate + H2O. Its pathway is amino-acid biosynthesis; L-histidine biosynthesis; L-histidine from 5-phospho-alpha-D-ribose 1-diphosphate: step 6/9. This is Imidazoleglycerol-phosphate dehydratase from Rhodopirellula baltica (strain DSM 10527 / NCIMB 13988 / SH1).